A 304-amino-acid polypeptide reads, in one-letter code: GTPase Era (304 aa).

One can recognise an Era-type G domain in the interval 11–179 (YCGFIAIVGR…QKIVRKSLRE (169 aa)). The G1 stretch occupies residues 19 to 26 (GRPNVGKS). Residue 19–26 (GRPNVGKS) coordinates GTP. The G2 stretch occupies residues 45-49 (QTTRH). Residues 66–69 (DTPG) are G3. GTP is bound by residues 66-70 (DTPGL) and 128-131 (NKVD). The tract at residues 128-131 (NKVD) is G4. Positions 158-160 (ISA) are G5. The KH type-2 domain occupies 210–287 (TGEELPYSVT…HLELWVKVKA (78 aa)).

This sequence belongs to the TRAFAC class TrmE-Era-EngA-EngB-Septin-like GTPase superfamily. Era GTPase family. Monomer.

It is found in the cytoplasm. It localises to the cell inner membrane. Functionally, an essential GTPase that binds both GDP and GTP, with rapid nucleotide exchange. Plays a role in 16S rRNA processing and 30S ribosomal subunit biogenesis and possibly also in cell cycle regulation and energy metabolism. This Actinobacillus pleuropneumoniae serotype 5b (strain L20) protein is GTPase Era.